Reading from the N-terminus, the 651-residue chain is MSAASLYPVRPEVAATTLTDEATYKAMYQQSVVNPDGFWREQAQRLDWIKPFSVVKQTSFDDHRVDIKWFADGTLNVAYNCLDRHLEERGDSIAIIWEGDDPSEHREITYRELHAEVCKFANALRGQDVHRGDVVTIYMPMIPEAVVAMLACARIGAIHSVVFGGFSPEALAGRIIDCSSKVVITADEGLRGGKKTALKANVDRALTNPETSSVQKVIVCKRTGGEIEWNRHRDIWYHSLLEVASSTCAPKEMGAEESLFILYTSGSTGKPKGVLHTTAGYLLYAALTHERVFDYRPGEVYWCTADVGWVTGHSYIVYGPLANGATTLLFEGVPNYPDITRVSKIIDKHKVNILYTAPTAIRAMMAEGTKSVEGADGSSLRLLGSVGEPINPEAWAWYYNTVGKQNCPIVDTWWQTETGGILISPLPGATALKPGSATRPFFGVIPALVDNLGNLIEGAAEGNLVILDSWPGQSRSLYGDHDRFVDTYFKTFRGMYFTGDGARRDEDGYFWITGRVDDVLNVSGHRMGTAEIESAMVAHPKVAEAAVVGVPHDLKGQGIYVYVTLNGGEEPSDALRTELRNWVRKEIGPIASPDFIQWAPGLPKTRSGKIMRRILRKIATAEYDALGDISTLADPGVVQHLIDTHKTMNAA.

Residues Arg191 to Lys194, Thr311, and Asn335 contribute to the CoA site. ATP-binding positions include Gly387–Pro389, Asp411–Thr416, Asp500, and Arg515. Residue Ser523 coordinates CoA. Residue Arg526 coordinates ATP. Val537, His539, and Val542 together coordinate Mg(2+). A CoA-binding site is contributed by Arg584. Lys609 is modified (N6-acetyllysine).

Belongs to the ATP-dependent AMP-binding enzyme family. Requires Mg(2+) as cofactor. Acetylated. Deacetylation by the SIR2-homolog deacetylase activates the enzyme.

It carries out the reaction acetate + ATP + CoA = acetyl-CoA + AMP + diphosphate. Its function is as follows. Catalyzes the conversion of acetate into acetyl-CoA (AcCoA), an essential intermediate at the junction of anabolic and catabolic pathways. AcsA undergoes a two-step reaction. In the first half reaction, AcsA combines acetate with ATP to form acetyl-adenylate (AcAMP) intermediate. In the second half reaction, it can then transfer the acetyl group from AcAMP to the sulfhydryl group of CoA, forming the product AcCoA. In Pseudomonas syringae pv. syringae (strain B728a), this protein is Acetyl-coenzyme A synthetase.